The chain runs to 351 residues: Cytochrome c biogenesis protein CcsA (351 aa).

Helical transmembrane passes span 12-32 (NISFGILFATMLIYWLGAAFP), 37-57 (LSILGSTGMAIANLCIATLLG), 68-88 (ISNLYESLFFLTWGITTIHLI), 97-117 (LVGVFTSPIAMGISAFAALTL), 143-163 (MMLSYATLIVGALLAIAFLII), 259-279 (IIGLGFPLLTIGIIAGAVWAN), 294-314 (WALITWLVFAAYLHARITKGW), and 320-340 (AILAATGFAVVWVCYLGVNLL).

It belongs to the CcmF/CycK/Ccl1/NrfE/CcsA family. In terms of assembly, may interact with ccs1.

The protein localises to the cellular thylakoid membrane. In terms of biological role, required during biogenesis of c-type cytochromes (cytochrome c6 and cytochrome f) at the step of heme attachment. The chain is Cytochrome c biogenesis protein CcsA from Trichodesmium erythraeum (strain IMS101).